Consider the following 120-residue polypeptide: Adult-specific rigid cuticular protein 11.9 (120 aa).

Positions 9-87 (GGAYNFGYNT…ALAAMAPKAP (79 aa)) constitute a Chitin-binding type R&amp;R domain.

Functionally, component of the rigid cuticle of the spider. The sequence is that of Adult-specific rigid cuticular protein 11.9 from Araneus diadematus (European garden spider).